The following is a 225-amino-acid chain: Uracil-DNA glycosylase (225 aa).

The Proton acceptor role is filled by Asp65.

It belongs to the uracil-DNA glycosylase (UDG) superfamily. UNG family.

Its subcellular location is the cytoplasm. The catalysed reaction is Hydrolyzes single-stranded DNA or mismatched double-stranded DNA and polynucleotides, releasing free uracil.. Excises uracil residues from the DNA which can arise as a result of misincorporation of dUMP residues by DNA polymerase or due to deamination of cytosine. The protein is Uracil-DNA glycosylase of Bacillus cytotoxicus (strain DSM 22905 / CIP 110041 / 391-98 / NVH 391-98).